The following is a 98-amino-acid chain: Putative pterin-4-alpha-carbinolamine dehydratase (98 aa).

It belongs to the pterin-4-alpha-carbinolamine dehydratase family.

The enzyme catalyses (4aS,6R)-4a-hydroxy-L-erythro-5,6,7,8-tetrahydrobiopterin = (6R)-L-erythro-6,7-dihydrobiopterin + H2O. This Chelativorans sp. (strain BNC1) protein is Putative pterin-4-alpha-carbinolamine dehydratase.